A 308-amino-acid polypeptide reads, in one-letter code: Pyrroline-5-carboxylate reductase 3 (308 aa).

Belongs to the pyrroline-5-carboxylate reductase family. In terms of assembly, homodecamer; composed of 5 homodimers.

The protein resides in the cytoplasm. It catalyses the reaction L-proline + NADP(+) = (S)-1-pyrroline-5-carboxylate + NADPH + 2 H(+). The enzyme catalyses L-proline + NAD(+) = (S)-1-pyrroline-5-carboxylate + NADH + 2 H(+). The protein operates within amino-acid biosynthesis; L-proline biosynthesis; L-proline from L-glutamate 5-semialdehyde: step 1/1. Functionally, oxidoreductase that catalyzes the last step in proline biosynthesis, which corresponds to the reduction of pyrroline-5-carboxylate (P5C) to L-proline using NAD(P)H. Proline is synthesized from either glutamate or ornithine; both are converted to P5C, and then to proline via pyrroline-5-carboxylate reductases (PYCRs). PYCR3 is exclusively linked to the biosynthesis of proline from ornithine. The polypeptide is Pyrroline-5-carboxylate reductase 3 (Bos taurus (Bovine)).